The chain runs to 438 residues: Glucosamine kinase (438 aa).

Residues lysine 133, 186–188 (AYL), and aspartate 193 contribute to the ATP site. D-glucosamine is bound at residue aspartate 300. Residues glutamine 305, aspartate 317, and aspartate 319 each contribute to the Mg(2+) site. Residues 405-420 (QEVREYLYAVRHLPHW) carry the Substrate specificity determinant motif motif. Glutamate 409 lines the D-glucosamine pocket.

This sequence belongs to the actinobacterial glucosamine kinase family. As to quaternary structure, monomer. The cofactor is Mg(2+).

The catalysed reaction is D-glucosamine + ATP = D-glucosamine 6-phosphate + ADP + H(+). Its function is as follows. Catalyzes the ATP-dependent phosphorylation of D-glucosamine (GlcN) to D-glucosamine 6-phosphate. May be involved in the phosphorylation of acquired extracellular GlcN derived from the hydrolysis of chitosan, i.e., in the incorporation of exogenous GlcN into the bacterial GlcNAc metabolism. To a lesser extent, is also active on glucose, but is unable to phosphorylate maltose, 18 other sugars and several aminoglycoside antibiotics. The polypeptide is Glucosamine kinase (Streptacidiphilus jiangxiensis).